A 522-amino-acid chain; its full sequence is Lysine--tRNA ligase (522 aa).

Positions 44-52 (PSGLPHIGT) match the 'HIGH' region motif. Positions 290–294 (KISKS) match the 'KMSKS' region motif. Lys293 is a binding site for ATP.

Belongs to the class-I aminoacyl-tRNA synthetase family.

Its subcellular location is the cytoplasm. The catalysed reaction is tRNA(Lys) + L-lysine + ATP = L-lysyl-tRNA(Lys) + AMP + diphosphate. This Rickettsia peacockii (strain Rustic) protein is Lysine--tRNA ligase.